The chain runs to 325 residues: Glycerol-3-phosphate dehydrogenase [NAD(P)+] (325 aa).

NADPH contacts are provided by Ser-14, Phe-15, Arg-35, and Lys-109. Sn-glycerol 3-phosphate contacts are provided by Lys-109 and Gly-137. Ala-141 provides a ligand contact to NADPH. Residues Lys-192, Asp-247, Ser-257, Arg-258, and Asn-259 each contribute to the sn-glycerol 3-phosphate site. The active-site Proton acceptor is Lys-192. NADPH is bound at residue Arg-258. Leu-282 and Glu-284 together coordinate NADPH.

Belongs to the NAD-dependent glycerol-3-phosphate dehydrogenase family.

It localises to the cytoplasm. It carries out the reaction sn-glycerol 3-phosphate + NAD(+) = dihydroxyacetone phosphate + NADH + H(+). The catalysed reaction is sn-glycerol 3-phosphate + NADP(+) = dihydroxyacetone phosphate + NADPH + H(+). It participates in membrane lipid metabolism; glycerophospholipid metabolism. Its function is as follows. Catalyzes the reduction of the glycolytic intermediate dihydroxyacetone phosphate (DHAP) to sn-glycerol 3-phosphate (G3P), the key precursor for phospholipid synthesis. This is Glycerol-3-phosphate dehydrogenase [NAD(P)+] from Rickettsia conorii (strain ATCC VR-613 / Malish 7).